The following is a 62-amino-acid chain: Photosystem II reaction center protein Z (62 aa).

2 helical membrane-spanning segments follow: residues 8–28 (ALAA…VAYA) and 41–61 (FVGS…NFFV).

This sequence belongs to the PsbZ family. In terms of assembly, PSII is composed of 1 copy each of membrane proteins PsbA, PsbB, PsbC, PsbD, PsbE, PsbF, PsbH, PsbI, PsbJ, PsbK, PsbL, PsbM, PsbT, PsbX, PsbY, PsbZ, Psb30/Ycf12, peripheral proteins PsbO, CyanoQ (PsbQ), PsbU, PsbV and a large number of cofactors. It forms dimeric complexes.

It localises to the cellular thylakoid membrane. Functionally, may control the interaction of photosystem II (PSII) cores with the light-harvesting antenna, regulates electron flow through the 2 photosystem reaction centers. PSII is a light-driven water plastoquinone oxidoreductase, using light energy to abstract electrons from H(2)O, generating a proton gradient subsequently used for ATP formation. The protein is Photosystem II reaction center protein Z of Picosynechococcus sp. (strain ATCC 27264 / PCC 7002 / PR-6) (Agmenellum quadruplicatum).